Here is a 92-residue protein sequence, read N- to C-terminus: Small ribosomal subunit protein uS19 (92 aa).

Belongs to the universal ribosomal protein uS19 family.

Protein S19 forms a complex with S13 that binds strongly to the 16S ribosomal RNA. The sequence is that of Small ribosomal subunit protein uS19 from Sulfurovum sp. (strain NBC37-1).